An 882-amino-acid chain; its full sequence is Valine--tRNA ligase (882 aa).

The short motif at 45–55 (PNVTGKLHLGH) is the 'HIGH' region element. Residues 519 to 523 (KMSKS) carry the 'KMSKS' region motif. Lys-522 lines the ATP pocket. A coiled-coil region spans residues 808 to 882 (LADLLNVEEE…RIAEMKKIKS (75 aa)).

Belongs to the class-I aminoacyl-tRNA synthetase family. ValS type 1 subfamily. As to quaternary structure, monomer.

The protein resides in the cytoplasm. The catalysed reaction is tRNA(Val) + L-valine + ATP = L-valyl-tRNA(Val) + AMP + diphosphate. Catalyzes the attachment of valine to tRNA(Val). As ValRS can inadvertently accommodate and process structurally similar amino acids such as threonine, to avoid such errors, it has a 'posttransfer' editing activity that hydrolyzes mischarged Thr-tRNA(Val) in a tRNA-dependent manner. The chain is Valine--tRNA ligase from Streptococcus pyogenes serotype M28 (strain MGAS6180).